The primary structure comprises 490 residues: Proline--tRNA ligase (490 aa).

This sequence belongs to the class-II aminoacyl-tRNA synthetase family. ProS type 3 subfamily. Homodimer.

The protein localises to the cytoplasm. It carries out the reaction tRNA(Pro) + L-proline + ATP = L-prolyl-tRNA(Pro) + AMP + diphosphate. Its function is as follows. Catalyzes the attachment of proline to tRNA(Pro) in a two-step reaction: proline is first activated by ATP to form Pro-AMP and then transferred to the acceptor end of tRNA(Pro). This chain is Proline--tRNA ligase, found in Salinibacter ruber (strain DSM 13855 / M31).